The sequence spans 78 residues: Acyl carrier protein (78 aa).

A Carrier domain is found at 2–77 (STIEERVKKI…AAIDYVNSHK (76 aa)). An O-(pantetheine 4'-phosphoryl)serine modification is found at S37.

The protein belongs to the acyl carrier protein (ACP) family. Post-translationally, 4'-phosphopantetheine is transferred from CoA to a specific serine of apo-ACP by AcpS. This modification is essential for activity because fatty acids are bound in thioester linkage to the sulfhydryl of the prosthetic group.

It localises to the cytoplasm. It functions in the pathway lipid metabolism; fatty acid biosynthesis. In terms of biological role, carrier of the growing fatty acid chain in fatty acid biosynthesis. The polypeptide is Acyl carrier protein (Pseudomonas putida (strain GB-1)).